The following is a 264-amino-acid chain: Ribosomal protein L11 methyltransferase (264 aa).

The S-adenosyl-L-methionine site is built by threonine 116, glycine 137, aspartate 159, and asparagine 200.

The protein belongs to the methyltransferase superfamily. PrmA family.

It is found in the cytoplasm. It carries out the reaction L-lysyl-[protein] + 3 S-adenosyl-L-methionine = N(6),N(6),N(6)-trimethyl-L-lysyl-[protein] + 3 S-adenosyl-L-homocysteine + 3 H(+). Functionally, methylates ribosomal protein L11. This Thermotoga petrophila (strain ATCC BAA-488 / DSM 13995 / JCM 10881 / RKU-1) protein is Ribosomal protein L11 methyltransferase.